The chain runs to 368 residues: Phosphate acyltransferase (368 aa).

The protein belongs to the PlsX family. As to quaternary structure, homodimer. Probably interacts with PlsY.

The protein resides in the cytoplasm. It carries out the reaction a fatty acyl-[ACP] + phosphate = an acyl phosphate + holo-[ACP]. It functions in the pathway lipid metabolism; phospholipid metabolism. In terms of biological role, catalyzes the reversible formation of acyl-phosphate (acyl-PO(4)) from acyl-[acyl-carrier-protein] (acyl-ACP). This enzyme utilizes acyl-ACP as fatty acyl donor, but not acyl-CoA. This chain is Phosphate acyltransferase, found in Granulibacter bethesdensis (strain ATCC BAA-1260 / CGDNIH1).